A 225-amino-acid chain; its full sequence is 7-cyano-7-deazaguanine synthase (225 aa).

10–20 (FSGGQDSTTLA) contacts ATP. The Zn(2+) site is built by Cys190, Cys205, Cys208, and Cys211.

This sequence belongs to the QueC family. The cofactor is Zn(2+).

It carries out the reaction 7-carboxy-7-deazaguanine + NH4(+) + ATP = 7-cyano-7-deazaguanine + ADP + phosphate + H2O + H(+). It functions in the pathway purine metabolism; 7-cyano-7-deazaguanine biosynthesis. In terms of biological role, catalyzes the ATP-dependent conversion of 7-carboxy-7-deazaguanine (CDG) to 7-cyano-7-deazaguanine (preQ(0)). The protein is 7-cyano-7-deazaguanine synthase of Helicobacter acinonychis (strain Sheeba).